The following is a 445-amino-acid chain: KIN17-like protein (445 aa).

A C2H2-type zinc finger spans residues 26-50 (WYCQLCEKQCRDENGFKCHISSESH). Low complexity-rich tracts occupy residues 215-229 (NTTTTTTNTTTTTTN) and 239-253 (NDNNSSNNNYNDQTN). The segment at 215 to 256 (NTTTTTTNTTTTTTNKNIFDKLKTNDNNSSNNNYNDQTNPKP) is disordered.

The protein belongs to the KIN17 family.

The polypeptide is KIN17-like protein (Dictyostelium discoideum (Social amoeba)).